Consider the following 1205-residue polypeptide: Plasma membrane calcium-transporting ATPase 1 (1205 aa).

Topologically, residues G2–A104 are cytoplasmic. Residues P94 to I111 form a calmodulin-binding subdomain A region. The helical transmembrane segment at L105 to F125 threads the bilayer. The Extracellular portion of the chain corresponds to Y126–I153. Residues E154–W174 form a helical membrane-spanning segment. The Cytoplasmic portion of the chain corresponds to S175–L351. Residues E296–E343 are disordered. 2 stretches are compositionally biased toward basic and acidic residues: residues E300 to A310 and K322 to E343. A helical transmembrane segment spans residues T352 to I371. Residues I372 to K403 lie on the Extracellular side of the membrane. Residues F404–V424 traverse the membrane as a helical segment. Residues T425–F840 are Cytoplasmic-facing. D460 serves as the catalytic 4-aspartylphosphate intermediate. Residues D460, T462, and D782 each coordinate Mg(2+). Residues L841 to I861 form a helical membrane-spanning segment. Residues T862–K868 are Extracellular-facing. A helical transmembrane segment spans residues A869–T889. The Cytoplasmic segment spans residues E890–T912. A helical membrane pass occupies residues M913–F933. The Extracellular portion of the chain corresponds to A934–H956. A helical membrane pass occupies residues Y957–R976. Residues K977–N990 lie on the Cytoplasmic side of the membrane. A helical transmembrane segment spans residues N991–G1012. Residues G1013–E1024 are Extracellular-facing. A helical membrane pass occupies residues Q1025 to T1045. The Cytoplasmic portion of the chain corresponds to I1046–L1205. T1101 is subject to Phosphothreonine; by PKC. Residues P1145–L1205 form a disordered region. The span at T1183 to L1205 shows a compositional bias: polar residues.

Belongs to the cation transport ATPase (P-type) (TC 3.A.3) family. Type IIB subfamily.

It localises to the cell membrane. The catalysed reaction is Ca(2+)(in) + ATP + H2O = Ca(2+)(out) + ADP + phosphate + H(+). Catalyzes the hydrolysis of ATP coupled with the transport of calcium from the cytoplasm to the extracellular space thereby maintaining intracellular calcium homeostasis. The chain is Plasma membrane calcium-transporting ATPase 1 from Gallus gallus (Chicken).